Consider the following 375-residue polypeptide: Ribonuclease D (375 aa).

The 3'-5' exonuclease domain maps to 3 to 169 (YQMITTDDAL…LPITAKLMVE (167 aa)). The HRDC domain occupies 210–289 (RTRQLACLQL…EKAQTLPEDA (80 aa)).

Belongs to the RNase D family. Requires a divalent metal cation as cofactor.

Its subcellular location is the cytoplasm. The catalysed reaction is Exonucleolytic cleavage that removes extra residues from the 3'-terminus of tRNA to produce 5'-mononucleotides.. Exonuclease involved in the 3' processing of various precursor tRNAs. Initiates hydrolysis at the 3'-terminus of an RNA molecule and releases 5'-mononucleotides. The chain is Ribonuclease D from Escherichia coli (strain K12).